Here is a 46-residue protein sequence, read N- to C-terminus: Myoregulin (46 aa).

The Cytoplasmic segment spans residues 1 to 21; the sequence is MTGKNWILISTTTPKSLEDEI. A helical membrane pass occupies residues 22 to 42; it reads VGRLLKILFVIFVDLISIIYV. Topologically, residues 43–46 are lumenal; it reads VITS.

As to quaternary structure, homooligomer. Monomer. Interacts with ATP2A1/SERCA1. Interacts as a monomer with ATP2A2/SERCA2; the interaction inhibits ATP2A2 activity.

The protein localises to the sarcoplasmic reticulum membrane. Inhibits the activity of ATP2A1/SERCA1 ATPase in sarcoplasmic reticulum by decreasing the apparent affinity of the ATPase for Ca(2+), thereby acting as a key regulator of skeletal muscle activity. Its high expression in adult skeletal muscle, suggests that it constitutes the predominant regulator of ATP2A1/SERCA1 in adult skeletal muscle. Also inhibits the activity of ATP2A2/SERCA2 and ATP2A3/SERCA3. The chain is Myoregulin from Homo sapiens (Human).